The following is a 134-amino-acid chain: Acyl carrier protein, chloroplastic (134 aa).

The N-terminal 51 residues, 1-51 (MSTTFCSSVSMQATSLAATTRISFQKPGLVSRTNLSFNLRRSIPTRLSVSC), are a transit peptide targeting the chloroplast. The 76-residue stretch at 55–130 (PETVEKVSKI…EAAELIEELV (76 aa)) folds into the Carrier domain. Ser90 carries the post-translational modification O-(pantetheine 4'-phosphoryl)serine.

Belongs to the acyl carrier protein (ACP) family. Post-translationally, 4'-phosphopantetheine is transferred from CoA to a specific serine of apo-ACP by acpS. This modification is essential for activity because fatty acids are bound in thioester linkage to the sulfhydryl of the prosthetic group. Seed.

Its subcellular location is the plastid. The protein resides in the chloroplast. The protein operates within lipid metabolism; fatty acid biosynthesis. In terms of biological role, carrier of the growing fatty acid chain in fatty acid biosynthesis. The polypeptide is Acyl carrier protein, chloroplastic (ACL1.A2) (Brassica napus (Rape)).